A 294-amino-acid polypeptide reads, in one-letter code: Probable 3-hydroxyisobutyrate dehydrogenase (294 aa).

Residues 3–31 (TIAF…RGFD) and T93 each bind NAD(+). Residue K168 is part of the active site. K243 contributes to the NAD(+) binding site.

It belongs to the HIBADH-related family.

It catalyses the reaction 3-hydroxy-2-methylpropanoate + NAD(+) = 2-methyl-3-oxopropanoate + NADH + H(+). It participates in amino-acid degradation; L-valine degradation. In Mycobacterium bovis (strain ATCC BAA-935 / AF2122/97), this protein is Probable 3-hydroxyisobutyrate dehydrogenase (mmsB).